Consider the following 287-residue polypeptide: Bifunctional protein FolD (287 aa).

NADP(+)-binding positions include 160–162 (GRS), S189, and T230.

This sequence belongs to the tetrahydrofolate dehydrogenase/cyclohydrolase family. As to quaternary structure, homodimer.

It carries out the reaction (6R)-5,10-methylene-5,6,7,8-tetrahydrofolate + NADP(+) = (6R)-5,10-methenyltetrahydrofolate + NADPH. It catalyses the reaction (6R)-5,10-methenyltetrahydrofolate + H2O = (6R)-10-formyltetrahydrofolate + H(+). The protein operates within one-carbon metabolism; tetrahydrofolate interconversion. Its function is as follows. Catalyzes the oxidation of 5,10-methylenetetrahydrofolate to 5,10-methenyltetrahydrofolate and then the hydrolysis of 5,10-methenyltetrahydrofolate to 10-formyltetrahydrofolate. The polypeptide is Bifunctional protein FolD (Chlamydia caviae (strain ATCC VR-813 / DSM 19441 / 03DC25 / GPIC) (Chlamydophila caviae)).